Reading from the N-terminus, the 118-residue chain is MDIIRRIEQTMMREDVPPVEVGDTVRVKWRFTERDRSGEDKSRVQAYEGIVIAKKGTGISESIVVRKISSGVGVEKTFPLHSPNLVDLEVVTRGKVRRAKLYYLREKKHLVVKKKSRF.

This sequence belongs to the bacterial ribosomal protein bL19 family.

Its function is as follows. This protein is located at the 30S-50S ribosomal subunit interface and may play a role in the structure and function of the aminoacyl-tRNA binding site. This is Large ribosomal subunit protein bL19 from Coprothermobacter proteolyticus (strain ATCC 35245 / DSM 5265 / OCM 4 / BT).